Here is a 128-residue protein sequence, read N- to C-terminus: Small ribosomal subunit protein eS8 (128 aa).

The tract at residues 1 to 31 (MAWYQGNDLRKPTGGKKTRHRKKRKHELGRP) is disordered. Over residues 13–27 (TGGKKTRHRKKRKHE) the composition is skewed to basic residues.

The protein belongs to the eukaryotic ribosomal protein eS8 family. As to quaternary structure, part of the 30S ribosomal subunit.

The chain is Small ribosomal subunit protein eS8 from Staphylothermus marinus (strain ATCC 43588 / DSM 3639 / JCM 9404 / F1).